A 140-amino-acid chain; its full sequence is Histone H2B (140 aa).

The span at 1-10 (MPPKAAEKKP) shows a compositional bias: basic and acidic residues. Residues 1–48 (MPPKAAEKKPSTGGKAPAGKAPAEKKEAGKKTAAAASGEKKKRGKTRK) form a disordered region. An N6-acetyllysine; alternate mark is found at K8 and K9. Residues K8 and K9 each participate in a glycyl lysine isopeptide (Lys-Gly) (interchain with G-Cter in SUMO); alternate cross-link. Positions 11–21 (STGGKAPAGKA) are enriched in low complexity. Position 15 is an N6-acetyllysine (K15). At K25 the chain carries N6-acetyllysine; alternate. Residue K25 forms a Glycyl lysine isopeptide (Lys-Gly) (interchain with G-Cter in SUMO); alternate linkage. K26 is covalently cross-linked (Glycyl lysine isopeptide (Lys-Gly) (interchain with G-Cter in SUMO)). K134 is covalently cross-linked (Glycyl lysine isopeptide (Lys-Gly) (interchain with G-Cter in ubiquitin)).

The protein belongs to the histone H2B family. As to quaternary structure, the nucleosome is a histone octamer containing two molecules each of H2A, H2B, H3 and H4 assembled in one H3-H4 heterotetramer and two H2A-H2B heterodimers. The octamer wraps approximately 147 bp of DNA. Post-translationally, monoubiquitinated by the ubc2-bre1 complex to form H2BK123ub1. H2BK123ub1 gives a specific tag for epigenetic transcriptional activation and is also prerequisite for H3K4me and H3K79me formation. H2BK123ub1 also modulates the formation of double-strand breaks during meiosis and is a prerequisite for DNA-damage checkpoint activation. Acetylated by gcn5 to form H2BK11ac and H2BK16ac. H2BK16ac can also be formed by esa1. Acetylation of N-terminal lysines and particularly formation of H2BK11acK16ac has a positive effect on transcription. In terms of processing, sumoylation to form H2BK6su or H2BK7su, and probably also H2BK16su or H2BK17su, occurs preferentially near the telomeres and represses gene transcription.

The protein localises to the nucleus. It is found in the chromosome. Its function is as follows. Core component of nucleosome. Nucleosomes wrap and compact DNA into chromatin, limiting DNA accessibility to the cellular machineries which require DNA as a template. Histones thereby play a central role in transcription regulation, DNA repair, DNA replication and chromosomal stability. DNA accessibility is regulated via a complex set of post-translational modifications of histones, also called histone code, and nucleosome remodeling. This chain is Histone H2B (htbA), found in Emericella nidulans (strain FGSC A4 / ATCC 38163 / CBS 112.46 / NRRL 194 / M139) (Aspergillus nidulans).